We begin with the raw amino-acid sequence, 849 residues long: Disks large homolog 3 (849 aa).

The segment at 32–101 (DWQVPDPYGP…GKSTPKLNGS (70 aa)) is disordered. Gly residues predominate over residues 41 to 53 (PSGGNGASSGYGG). Residues 57 to 69 (QTLPSQAGATPTP) show a composition bias toward polar residues. 3 consecutive PDZ domains span residues 149 to 235 (EIVL…VRRR), 244 to 330 (EVNL…VAKP), and 404 to 484 (KIIL…AQYR). Ser157 carries the phosphoserine modification. The SH3 domain maps to 519 to 589 (KRSLYVRALF…PSKKRVEKKE (71 aa)). The Guanylate kinase-like domain maps to 659–834 (ARPVIILGPM…IYNKIKQIIE (176 aa)). The residue at position 705 (Tyr705) is a Phosphotyrosine.

It belongs to the MAGUK family. In terms of assembly, interacts through its PDZ domains with NETO1, GRIN2B, SYNGAP1 and APC. Interacts through its first two PDZ domains with ERBB4. Interacts through its third PDZ domain with NLGN1, and probably with NLGN2 and NLGN3. Interacts through its guanylate kinase-like domain with DLGAP1, DLGAP2, DLGAP3 and DLGAP4. Interacts with FRMPD4 (via C-terminus). Interacts with LRFN1, LRFN2 and LRFN4. Interacts with FLTP. Interacts with GPR85. Interacts with DGKI (via PDZ-binding motif).

Required for learning most likely through its role in synaptic plasticity following NMDA receptor signaling. The polypeptide is Disks large homolog 3 (Dlg3) (Mus musculus (Mouse)).